Here is a 959-residue protein sequence, read N- to C-terminus: Leucine--tRNA ligase (959 aa).

Positions 39 to 49 (PYVNAYPHLGS) match the 'HIGH' region motif. The 'KMSKS' region motif lies at 637–641 (KMSKS). Residue Lys-640 participates in ATP binding. Residues 933–959 (TEEDGGSPRRANALPGRPALYAEKRGG) form a disordered region.

This sequence belongs to the class-I aminoacyl-tRNA synthetase family.

The protein localises to the cytoplasm. The catalysed reaction is tRNA(Leu) + L-leucine + ATP = L-leucyl-tRNA(Leu) + AMP + diphosphate. The sequence is that of Leucine--tRNA ligase from Aeropyrum pernix (strain ATCC 700893 / DSM 11879 / JCM 9820 / NBRC 100138 / K1).